Reading from the N-terminus, the 288-residue chain is 4-diphosphocytidyl-2-C-methyl-D-erythritol kinase (288 aa).

Lys-8 is a catalytic residue. Position 90 to 100 (90 to 100) interacts with ATP; the sequence is PVGAGLAGGSS. The active site involves Asp-132.

This sequence belongs to the GHMP kinase family. IspE subfamily.

The enzyme catalyses 4-CDP-2-C-methyl-D-erythritol + ATP = 4-CDP-2-C-methyl-D-erythritol 2-phosphate + ADP + H(+). The protein operates within isoprenoid biosynthesis; isopentenyl diphosphate biosynthesis via DXP pathway; isopentenyl diphosphate from 1-deoxy-D-xylulose 5-phosphate: step 3/6. In terms of biological role, catalyzes the phosphorylation of the position 2 hydroxy group of 4-diphosphocytidyl-2C-methyl-D-erythritol. The polypeptide is 4-diphosphocytidyl-2-C-methyl-D-erythritol kinase (Chlamydia trachomatis serovar L2b (strain UCH-1/proctitis)).